The chain runs to 206 residues: Thymidylate kinase (206 aa).

An ATP-binding site is contributed by 11–18 (GIDGAGKT).

This sequence belongs to the thymidylate kinase family.

The enzyme catalyses dTMP + ATP = dTDP + ADP. Its function is as follows. Phosphorylation of dTMP to form dTDP in both de novo and salvage pathways of dTTP synthesis. In Burkholderia pseudomallei (strain 1106a), this protein is Thymidylate kinase.